The primary structure comprises 432 residues: Probable exopolygalacturonase X (432 aa).

The first 23 residues, 1–23 (MKFSYSFVQVVSLLLSLSPSVEG), serve as a signal peptide directing secretion. Asparagine 113, asparagine 129, and asparagine 199 each carry an N-linked (GlcNAc...) asparagine glycan. Residues 231-252 (SDNIVIQNSVINNGDDCVSFKP) form a PbH1 1 repeat. Aspartate 245 acts as the Proton donor in catalysis. Cysteine 247 and cysteine 264 form a disulfide bridge. N-linked (GlcNAc...) asparagine glycans are attached at residues asparagine 253 and asparagine 265. 3 PbH1 repeats span residues 254–274 (STNI…SVGS), 285–306 (VQNV…RIKV), and 327–348 (VKNI…EVTQ). Residue histidine 268 is part of the active site. 5 N-linked (GlcNAc...) asparagine glycosylation sites follow: asparagine 292, asparagine 297, asparagine 329, asparagine 354, and asparagine 364. One copy of the PbH1 5 repeat lies at 362–394 (PSNLTISDIHFKNFRGTTSGKRDPDVGTIVCSS). Cysteine 392 and cysteine 398 are disulfide-bonded.

This sequence belongs to the glycosyl hydrolase 28 family.

The protein resides in the secreted. It catalyses the reaction [(1-&gt;4)-alpha-D-galacturonosyl](n) + H2O = alpha-D-galacturonate + [(1-&gt;4)-alpha-D-galacturonosyl](n-1). Specific in hydrolyzing the terminal glycosidic bond of polygalacturonic acid and oligogalacturonates. In Neosartorya fischeri (strain ATCC 1020 / DSM 3700 / CBS 544.65 / FGSC A1164 / JCM 1740 / NRRL 181 / WB 181) (Aspergillus fischerianus), this protein is Probable exopolygalacturonase X (pgaX).